The chain runs to 110 residues: MPFGWGRGRGRRRKMRMIRFPPQVRHFYPAIPSVGPPKPPIIMTYEEFEALRLVDYEGLTQEEAGRRMGISRGTVWRALTSARKKVAQMLVEGRELIILPQGNEIVRDEK.

Belongs to the UPF0251 family.

This is UPF0251 protein PH0803 from Pyrococcus horikoshii (strain ATCC 700860 / DSM 12428 / JCM 9974 / NBRC 100139 / OT-3).